The primary structure comprises 309 residues: Serine/threonine-protein phosphatase PP2A catalytic subunit (309 aa).

Aspartate 57, histidine 59, aspartate 85, and asparagine 117 together coordinate Mn(2+). The active-site Proton donor is histidine 118. Mn(2+)-binding residues include histidine 167 and histidine 241.

The protein belongs to the PPP phosphatase family. PP-2A subfamily. Mn(2+) serves as cofactor.

The enzyme catalyses O-phospho-L-seryl-[protein] + H2O = L-seryl-[protein] + phosphate. It catalyses the reaction O-phospho-L-threonyl-[protein] + H2O = L-threonyl-[protein] + phosphate. This is Serine/threonine-protein phosphatase PP2A catalytic subunit from Brassica napus (Rape).